The chain runs to 227 residues: Probable methylthioribulose-1-phosphate dehydratase (227 aa).

C87 contributes to the substrate binding site. 2 residues coordinate Zn(2+): H105 and H107. Catalysis depends on E129, which acts as the Proton donor/acceptor. Residue H185 participates in Zn(2+) binding.

The protein belongs to the aldolase class II family. MtnB subfamily. Zn(2+) serves as cofactor.

The protein localises to the cytoplasm. The catalysed reaction is 5-(methylsulfanyl)-D-ribulose 1-phosphate = 5-methylsulfanyl-2,3-dioxopentyl phosphate + H2O. It functions in the pathway amino-acid biosynthesis; L-methionine biosynthesis via salvage pathway; L-methionine from S-methyl-5-thio-alpha-D-ribose 1-phosphate: step 2/6. In terms of biological role, catalyzes the dehydration of methylthioribulose-1-phosphate (MTRu-1-P) into 2,3-diketo-5-methylthiopentyl-1-phosphate (DK-MTP-1-P). The polypeptide is Probable methylthioribulose-1-phosphate dehydratase (Drosophila melanogaster (Fruit fly)).